Here is a 192-residue protein sequence, read N- to C-terminus: Imidazole glycerol phosphate synthase subunit HisH (192 aa).

Positions 3–192 constitute a Glutamine amidotransferase type-1 domain; the sequence is TVALIDYGSG…LVANFLTWRV (190 aa). Active-site residues include histidine 172 and glutamate 174.

As to quaternary structure, heterodimer of HisH and HisF.

The protein resides in the cytoplasm. The enzyme catalyses 5-[(5-phospho-1-deoxy-D-ribulos-1-ylimino)methylamino]-1-(5-phospho-beta-D-ribosyl)imidazole-4-carboxamide + L-glutamine = D-erythro-1-(imidazol-4-yl)glycerol 3-phosphate + 5-amino-1-(5-phospho-beta-D-ribosyl)imidazole-4-carboxamide + L-glutamate + H(+). The catalysed reaction is L-glutamine + H2O = L-glutamate + NH4(+). It participates in amino-acid biosynthesis; L-histidine biosynthesis; L-histidine from 5-phospho-alpha-D-ribose 1-diphosphate: step 5/9. IGPS catalyzes the conversion of PRFAR and glutamine to IGP, AICAR and glutamate. The HisH subunit catalyzes the hydrolysis of glutamine to glutamate and ammonia as part of the synthesis of IGP and AICAR. The resulting ammonia molecule is channeled to the active site of HisF. This is Imidazole glycerol phosphate synthase subunit HisH (hisH) from Azospirillum brasilense.